A 156-amino-acid polypeptide reads, in one-letter code: ATP synthase subunit b (156 aa).

The helical transmembrane segment at 7–27 (LVAQMVVFFILWWVVAKFIWP) threads the bilayer.

It belongs to the ATPase B chain family. F-type ATPases have 2 components, F(1) - the catalytic core - and F(0) - the membrane proton channel. F(1) has five subunits: alpha(3), beta(3), gamma(1), delta(1), epsilon(1). F(0) has three main subunits: a(1), b(2) and c(10-14). The alpha and beta chains form an alternating ring which encloses part of the gamma chain. F(1) is attached to F(0) by a central stalk formed by the gamma and epsilon chains, while a peripheral stalk is formed by the delta and b chains.

Its subcellular location is the cell inner membrane. F(1)F(0) ATP synthase produces ATP from ADP in the presence of a proton or sodium gradient. F-type ATPases consist of two structural domains, F(1) containing the extramembraneous catalytic core and F(0) containing the membrane proton channel, linked together by a central stalk and a peripheral stalk. During catalysis, ATP synthesis in the catalytic domain of F(1) is coupled via a rotary mechanism of the central stalk subunits to proton translocation. Its function is as follows. Component of the F(0) channel, it forms part of the peripheral stalk, linking F(1) to F(0). The sequence is that of ATP synthase subunit b from Ralstonia pickettii (strain 12J).